The following is a 98-amino-acid chain: Sm-like protein LSM3B (98 aa).

Serine 2 bears the N-acetylserine mark. The 86-residue stretch at 11-96 (EPLDLIRLSL…VILVSPPLRT (86 aa)) folds into the Sm domain.

This sequence belongs to the snRNP Sm proteins family. Component of the heptameric LSM1-LSM7 complex that forms a seven-membered ring structure with a donut shape. The LSM subunits are arranged in the order LSM1, LSM2, LSM3, LSM6, LSM5, LSM7 and LSM4. Component of the heptameric LSM2-LSM8 complex that forms a seven-membered ring structure with a donut shape. The LSM subunits are arranged in the order LSM8, LSM2, LSM3, LSM6, LSM5, LSM7 and LSM4. LSM3B subunit interacts only with its two neighboring subunits, LSM2 and LSM6A or LSM6B. Expressed in roots, leaves, stems, flowers and siliques.

The protein localises to the cytoplasm. It is found in the nucleus. In terms of biological role, component of LSM protein complexes, which are involved in RNA processing. Component of the cytoplasmic LSM1-LSM7 complex which is involved in mRNA degradation by promoting decapping and leading to accurate 5'-3' mRNA decay. The cytoplasmic LSM1-LSM7 complex regulates developmental gene expression by the decapping of specific development-related transcripts. Component of the nuclear LSM2-LSM8 complex which is involved splicing nuclear mRNAs. LSM2-LSM8 binds directly to the U6 small nuclear RNAs (snRNAs) and is essential for accurate splicing of selected development-related mRNAs through the stabilization of the spliceosomal U6 snRNA. Plays a critical role in the regulation of development-related gene expression. The protein is Sm-like protein LSM3B of Arabidopsis thaliana (Mouse-ear cress).